The chain runs to 352 residues: MKVLGIESSCDETGVAVYDTELSGVPALRAHAVYSQIALHAEYGGVVPELASRDHVRKLLPLIRQTLGEAGLRIDELDGVAYTAGPGLVGALLVGAGVARSLAWALDVPAIGVHHMEGHLLAPLMEDDPPQAPFVALLVSGGHTQLVSVKALGSYQVLGETLDDAAGEAFDKTAKMMGLPYPGGPQLAALAETGTPGRYKFARPMTDRPGLDFSFSGLKTQVLLAWRSSDQSDTTRADIARGFEDAVVDTLAIKCLRALDAAGCDTLVVAGGVGANKRLRARLQEAAQRRGGRVCFPRPALCTDNGAMIAFAGALRLQAGEHADAAVHVTPRWDMAALPPLAAQESGVGNRE.

H115 and H119 together coordinate Fe cation. Residues L138–G142, D171, G184, and N276 contribute to the substrate site. Position 304 (D304) interacts with Fe cation.

It belongs to the KAE1 / TsaD family. Requires Fe(2+) as cofactor.

It localises to the cytoplasm. The enzyme catalyses L-threonylcarbamoyladenylate + adenosine(37) in tRNA = N(6)-L-threonylcarbamoyladenosine(37) in tRNA + AMP + H(+). Functionally, required for the formation of a threonylcarbamoyl group on adenosine at position 37 (t(6)A37) in tRNAs that read codons beginning with adenine. Is involved in the transfer of the threonylcarbamoyl moiety of threonylcarbamoyl-AMP (TC-AMP) to the N6 group of A37, together with TsaE and TsaB. TsaD likely plays a direct catalytic role in this reaction. The polypeptide is tRNA N6-adenosine threonylcarbamoyltransferase (Xanthomonas axonopodis pv. citri (strain 306)).